An 85-amino-acid polypeptide reads, in one-letter code: Putative membrane protein insertion efficiency factor (85 aa).

It belongs to the UPF0161 family.

Its subcellular location is the cell inner membrane. Functionally, could be involved in insertion of integral membrane proteins into the membrane. This chain is Putative membrane protein insertion efficiency factor, found in Escherichia fergusonii (strain ATCC 35469 / DSM 13698 / CCUG 18766 / IAM 14443 / JCM 21226 / LMG 7866 / NBRC 102419 / NCTC 12128 / CDC 0568-73).